Reading from the N-terminus, the 271-residue chain is MKI67 FHA domain-interacting nucleolar phosphoprotein (271 aa).

A disordered region spans residues 1-20; it reads MAEYSGPAKPTLALNPREDS. An N-acetylalanine modification is found at alanine 2. Lysine 37 participates in a covalent cross-link: Glycyl lysine isopeptide (Lys-Gly) (interchain with G-Cter in SUMO2). Positions 44-122 constitute an RRM domain; that stretch reads GVVYLGHLPS…RLLSCKFMPR (79 aa). At arginine 113 the chain carries Omega-N-methylarginine. Residues lysine 178 and lysine 191 each participate in a glycyl lysine isopeptide (Lys-Gly) (interchain with G-Cter in SUMO2) cross-link. Phosphothreonine is present on residues threonine 213 and threonine 217. An omega-N-methylated arginine mark is found at arginine 223 and arginine 224. At serine 226 the chain carries Phosphoserine. The disordered stretch occupies residues 242 to 271; that stretch reads PVSPVKEDTQKTPAPESSGKKRLRKRKSKQ. Lysine 247 participates in a covalent cross-link: Glycyl lysine isopeptide (Lys-Gly) (interchain with G-Cter in SUMO1); alternate. A Glycyl lysine isopeptide (Lys-Gly) (interchain with G-Cter in SUMO2); alternate cross-link involves residue lysine 247. Basic residues predominate over residues 261–271; that stretch reads KKRLRKRKSKQ.

As to quaternary structure, binds to the FHA domain of MKI67; this interaction is enhanced in mitosis. Phosphorylated.

It is found in the nucleus. The protein resides in the nucleolus. It localises to the chromosome. This is MKI67 FHA domain-interacting nucleolar phosphoprotein (Nifk) from Rattus norvegicus (Rat).